The primary structure comprises 385 residues: 1-deoxy-D-xylulose 5-phosphate reductoisomerase 1 (385 aa).

6 residues coordinate NADPH: T11, G12, S13, I14, N39, and N122. K123 is a 1-deoxy-D-xylulose 5-phosphate binding site. E124 contacts NADPH. D148 contributes to the Mn(2+) binding site. 1-deoxy-D-xylulose 5-phosphate contacts are provided by S149, E150, S174, and H197. E150 is a binding site for Mn(2+). Residue G203 participates in NADPH binding. Residues S210, N215, K216, and E219 each contribute to the 1-deoxy-D-xylulose 5-phosphate site. E219 provides a ligand contact to Mn(2+).

Belongs to the DXR family. Mg(2+) is required as a cofactor. Requires Mn(2+) as cofactor.

It carries out the reaction 2-C-methyl-D-erythritol 4-phosphate + NADP(+) = 1-deoxy-D-xylulose 5-phosphate + NADPH + H(+). It functions in the pathway isoprenoid biosynthesis; isopentenyl diphosphate biosynthesis via DXP pathway; isopentenyl diphosphate from 1-deoxy-D-xylulose 5-phosphate: step 1/6. Functionally, catalyzes the NADPH-dependent rearrangement and reduction of 1-deoxy-D-xylulose-5-phosphate (DXP) to 2-C-methyl-D-erythritol 4-phosphate (MEP). This chain is 1-deoxy-D-xylulose 5-phosphate reductoisomerase 1, found in Bacillus cereus (strain ATCC 14579 / DSM 31 / CCUG 7414 / JCM 2152 / NBRC 15305 / NCIMB 9373 / NCTC 2599 / NRRL B-3711).